We begin with the raw amino-acid sequence, 424 residues long: 3-ketoacyl-CoA thiolase B, peroxisomal (424 aa).

A peroxisome-targeting transit peptide spans 1 to 26 (MHRLQVVLGHLAGRSESSSALQAAPC). The interval 1–26 (MHRLQVVLGHLAGRSESSSALQAAPC) is PTS2-type peroxisomal targeting signal. The Acyl-thioester intermediate role is filled by Cys-123. N6-acetyllysine occurs at positions 173 and 234. CoA contacts are provided by Arg-249, Thr-252, and Ser-276. Residue Cys-408 is the Proton donor/acceptor of the active site.

The protein belongs to the thiolase-like superfamily. Thiolase family. As to quaternary structure, homodimer. Interacts (via PTS2-type peroxisomal targeting signal region) with PEX7; leading to its translocation into peroxisomes.

It localises to the peroxisome. The enzyme catalyses an acyl-CoA + acetyl-CoA = a 3-oxoacyl-CoA + CoA. It catalyses the reaction 2 acetyl-CoA = acetoacetyl-CoA + CoA. It carries out the reaction hexanoyl-CoA + acetyl-CoA = 3-oxooctanoyl-CoA + CoA. The catalysed reaction is tetradecanoyl-CoA + acetyl-CoA = 3-oxohexadecanoyl-CoA + CoA. The enzyme catalyses 3-oxohexadecanedioyl-CoA + CoA = tetradecanedioyl-CoA + acetyl-CoA. It catalyses the reaction 3-oxo-(6Z,9Z,12Z,15Z,18Z,21Z)-tetracosahexaenoyl-CoA + CoA = (4Z,7Z,10Z,13Z,16Z,19Z)-docosahexaenoyl-CoA + acetyl-CoA. It participates in lipid metabolism; peroxisomal fatty acid beta-oxidation. Its function is as follows. Responsible for the thiolytic cleavage of straight chain 3-keto fatty acyl-CoAs (3-oxoacyl-CoAs). Plays an important role in fatty acid peroxisomal beta-oxidation. Catalyzes the cleavage of short, medium, long, and very long straight chain 3-oxoacyl-CoAs. Medium chain straight 3-oxoacyl-CoAs are preferred substrates. In Rattus norvegicus (Rat), this protein is 3-ketoacyl-CoA thiolase B, peroxisomal.